Here is a 380-residue protein sequence, read N- to C-terminus: Growth-regulating factor 4 (380 aa).

A disordered region spans residues 1–21 (MDLQLKQWRSQQQNESEEQGS). The QLQ domain occupies 82–117 (FFSWAQWQELELQALIYRYMLAGASVPQELLLPIKK). The WRC domain occupies 151-195 (DPEPGRCKRTDGKKWRCSRDVVAGHKYCDRHIHRGRNRSRKPVET). Short sequence motifs (bipartite nuclear localization signal) lie at residues 156–166 (RCKRTDGKKWR) and 184–191 (RGRNRSRK). Disordered regions lie at residues 222–270 (NNNH…GRSD) and 284–330 (RSSD…NMRN). Low complexity-rich tracts occupy residues 228 to 245 (SSGS…SCSS) and 285 to 296 (SSDSTSSPMSSS). Polar residues predominate over residues 297–320 (TCHLSISMPGNNTSSDVSLKLSTG).

The protein belongs to the GRF family. As to expression, strongly expressed in actively growing and developing tissues, such as roots, upper stems, and shoot tips containing the shoot apical meristem (SAM) and flower buds. Also expressed in mature flowers, but weakly expressed in mature stems and leaves.

It localises to the nucleus. Its function is as follows. Transcription activator that plays a role in the regulation of cell expansion in leaf and cotyledons tissues. Component of a network formed by miR396, the GRFs and their interacting factors (GIFs) acting in the regulation of meristem function, at least partially through the control of cell proliferation. The sequence is that of Growth-regulating factor 4 (GRF4) from Arabidopsis thaliana (Mouse-ear cress).